The sequence spans 200 residues: Serine/threonine-protein kinase mos (200 aa).

The Protein kinase domain occupies 2-200 (LCLLQPLGSG…ELLKGERVTA (199 aa)). ATP is bound by residues 8–16 (LGSGGFGSV) and K29. Residue D143 is the Proton acceptor of the active site.

The protein belongs to the protein kinase superfamily. Ser/Thr protein kinase family.

The enzyme catalyses L-seryl-[protein] + ATP = O-phospho-L-seryl-[protein] + ADP + H(+). It carries out the reaction L-threonyl-[protein] + ATP = O-phospho-L-threonyl-[protein] + ADP + H(+). This chain is Serine/threonine-protein kinase mos (MOS), found in Nycticorax nycticorax (Black-crowned night-heron).